The primary structure comprises 198 residues: Recombination protein RecR (198 aa).

Residues C57–C72 form a C4-type zinc finger. Residues S80–P175 enclose the Toprim domain.

Belongs to the RecR family.

Its function is as follows. May play a role in DNA repair. It seems to be involved in an RecBC-independent recombinational process of DNA repair. It may act with RecF and RecO. The chain is Recombination protein RecR from Brevibacillus brevis (strain 47 / JCM 6285 / NBRC 100599).